Consider the following 347-residue polypeptide: Queuosine 5'-phosphate N-glycosylase/hydrolase (347 aa).

Histidine 53, phenylalanine 237, aspartate 239, aspartate 321, and aspartate 326 together coordinate queuine. The active-site Nucleophile or transition state stabilizer is the aspartate 239.

Belongs to the QNG1 protein family.

The enzyme catalyses queuosine 5'-phosphate + H2O = queuine + D-ribose 5-phosphate. Catalyzes the hydrolysis of queuosine 5'-phosphate, releasing the nucleobase queuine (q). Is required for salvage of queuine from exogenous queuosine (Q) that is imported and then converted to queuosine 5'-phosphate intracellularly. The polypeptide is Queuosine 5'-phosphate N-glycosylase/hydrolase (Nematostella vectensis (Starlet sea anemone)).